The sequence spans 417 residues: Pygopus homolog 1 (417 aa).

Positions 1-11 (MSAEQDKEPIA) are enriched in basic and acidic residues. 3 disordered regions span residues 1-71 (MSAE…AANP), 175-265 (HFRQ…MEDP), and 284-318 (ENSR…CTPD). Gly residues predominate over residues 18–27 (GDSGLDGLGG). Residues 35 to 41 (PDKKKRK) carry the Nuclear localization signal motif. Composition is skewed to polar residues over residues 180–221 (SAEN…TNHS), 240–256 (DFTQ…SSTH), and 284–305 (ENSR…QNKP). The segment at 338–396 (VYPCGICTNEVNDDQDAILCEASCQKWFHRICTGMTETAYGLLTAEASAVWGCDTCMAD) adopts a PHD-type zinc-finger fold. Residues 339–386 (YPCGICTNEVNDDQDAILCEASCQKWFHRICTGMTETAYGLLTAEASA) are interaction with H3K4me2. Residues 371 to 389 (GMTETAYGLLTAEASAVWG) are interaction with BCL9.

In terms of assembly, interacts with BCL9 via The PHD-type zinc finger motiv, and thereby becomes part of the nuclear beta-catenin/TCF complex. Found in a complex with BCL9L, CDC73, CTNNB1 and PYGO1. Interacts with histone H3 mono-, di- or tri-methylated at 'Lys4' (H3K4me1, H3K4me2, H3K4me3); the interaction is enhanced by the interaction with BCL9.

It localises to the nucleus. Its function is as follows. Involved in signal transduction through the Wnt pathway. The polypeptide is Pygopus homolog 1 (Pygo1) (Mus musculus (Mouse)).